Reading from the N-terminus, the 1209-residue chain is DNA-directed RNA polymerase subunit beta' (1209 aa).

Zn(2+) contacts are provided by C60, C62, C75, and C78. D450, D452, and D454 together coordinate Mg(2+). 4 residues coordinate Zn(2+): C819, C893, C900, and C903.

The protein belongs to the RNA polymerase beta' chain family. In terms of assembly, the RNAP catalytic core consists of 2 alpha, 1 beta, 1 beta' and 1 omega subunit. When a sigma factor is associated with the core the holoenzyme is formed, which can initiate transcription. Mg(2+) is required as a cofactor. It depends on Zn(2+) as a cofactor.

The enzyme catalyses RNA(n) + a ribonucleoside 5'-triphosphate = RNA(n+1) + diphosphate. Functionally, DNA-dependent RNA polymerase catalyzes the transcription of DNA into RNA using the four ribonucleoside triphosphates as substrates. The polypeptide is DNA-directed RNA polymerase subunit beta' (Streptococcus mutans serotype c (strain ATCC 700610 / UA159)).